The primary structure comprises 263 residues: Shikimate dehydrogenase (NADP(+)) (263 aa).

Shikimate contacts are provided by residues 21–23 (TLS) and T67. The active-site Proton acceptor is the K71. E83 is an NADP(+) binding site. N92 and D103 together coordinate shikimate. Residues 126 to 130 (GAGGA) and L204 each bind NADP(+). Y206 lines the shikimate pocket. G227 is an NADP(+) binding site.

This sequence belongs to the shikimate dehydrogenase family. In terms of assembly, homodimer.

The catalysed reaction is shikimate + NADP(+) = 3-dehydroshikimate + NADPH + H(+). The protein operates within metabolic intermediate biosynthesis; chorismate biosynthesis; chorismate from D-erythrose 4-phosphate and phosphoenolpyruvate: step 4/7. Functionally, involved in the biosynthesis of the chorismate, which leads to the biosynthesis of aromatic amino acids. Catalyzes the reversible NADPH linked reduction of 3-dehydroshikimate (DHSA) to yield shikimate (SA). The sequence is that of Shikimate dehydrogenase (NADP(+)) from Sulfolobus acidocaldarius (strain ATCC 33909 / DSM 639 / JCM 8929 / NBRC 15157 / NCIMB 11770).